A 2194-amino-acid polypeptide reads, in one-letter code: Genome polyprotein (2194 aa).

The segment at 1-20 (MGAQVSRQQTGTHENANVAT) is disordered. The N-myristoyl glycine; by host moiety is linked to residue G2. The Cytoplasmic segment spans residues 2–1509 (GAQVSRQQTG…HISRAFIALQ (1508 aa)). Residues 558 to 574 (LPEQAATTQIGEIVKTV) are amphipathic alpha-helix. Residues H885 and D903 each act as for protease 2A activity in the active site. The Zn(2+) site is built by C920 and C922. The active-site For protease 2A activity is the C974. The Zn(2+) site is built by C980 and H982. A membrane-binding region spans residues 1114-1186 (SDSWLKKFTE…EHSCPNSEXQ (73 aa)). Residues 1114-1252 (SDSWLKKFTE…SPGTGKSVAS (139 aa)) are oligomerization. The segment at 1135–1139 (AQKID) is RNA-binding. The region spanning 1218 to 1374 (ERKINNYIQF…ESYKDGVRLD (157 aa)) is the SF3 helicase domain. 1242–1249 (GSPGTGKS) provides a ligand contact to ATP. Zn(2+) contacts are provided by C1382, C1395, and C1400. The C4-type; degenerate zinc-finger motif lies at 1382–1400 (CNPEKCRPTNYKKCCPLIC). Positions 1427–1434 (EYRIRNST) are RNA-binding. The interval 1438 to 1443 (LEALFQ) is oligomerization. Residues 1510-1525 (AITTFVSIAGVVYVIY) lie within the membrane without spanning it. At 1526 to 2194 (KLFAGIQGPY…SLRRKWLDSF (669 aa)) the chain is on the cytoplasmic side. Y1535 bears the O-(5'-phospho-RNA)-tyrosine mark. Residues 1555-1733 (GPSLDFAQAI…FAAMLLQNYF (179 aa)) form the Peptidase C3 domain. Residues H1594, E1625, and C1701 each act as for protease 3C activity in the active site. Positions 1960 to 2075 (GKIFAFDYTG…SYPHEIDPGL (116 aa)) constitute a RdRp catalytic domain. The Mg(2+) site is built by D1966 and D2061.

This sequence belongs to the picornaviruses polyprotein family. Interacts with capsid protein VP1 and capsid protein VP3 to form heterotrimeric protomers. As to quaternary structure, interacts with capsid protein VP0, and capsid protein VP3 to form heterotrimeric protomers. Five protomers subsequently associate to form pentamers which serve as building blocks for the capsid. Interacts with capsid protein VP2, capsid protein VP3 and capsid protein VP4 following cleavage of capsid protein VP0. In terms of assembly, interacts with capsid protein VP1 and capsid protein VP3 in the mature capsid. Interacts with capsid protein VP0 and capsid protein VP1 to form heterotrimeric protomers. Five protomers subsequently associate to form pentamers which serve as building blocks for the capsid. Interacts with capsid protein VP4 in the mature capsid. Interacts with protein 2C; this interaction may be important for virion morphogenesis. As to quaternary structure, interacts with capsid protein VP1 and capsid protein VP3. In terms of assembly, homodimer. Homohexamer; forms a hexameric ring structure with 6-fold symmetry characteristic of AAA+ ATPases. Interacts (via N-terminus) with host RTN3 (via reticulon domain); this interaction is important for viral replication. Interacts with capsid protein VP3; this interaction may be important for virion morphogenesis. As to quaternary structure, interacts with protein 3CD. In terms of assembly, homodimer. Interacts with host GBF1. Interacts (via GOLD domain) with host ACBD3 (via GOLD domain); this interaction allows the formation of a viral protein 3A/ACBD3 heterotetramer with a 2:2 stoichiometry, which will stimulate the recruitment of host PI4KB in order to synthesize PI4P at the viral RNA replication sites. Interacts with RNA-directed RNA polymerase. As to quaternary structure, interacts with protein 3AB and with RNA-directed RNA polymerase. In terms of assembly, interacts with Viral protein genome-linked and with protein 3CD. It depends on Mg(2+) as a cofactor. Post-translationally, specific enzymatic cleavages in vivo by the viral proteases yield processing intermediates and the mature proteins. Myristoylation is required for the formation of pentamers during virus assembly. Further assembly of 12 pentamers and a molecule of genomic RNA generates the provirion. In terms of processing, during virion maturation, immature virions are rendered infectious following cleavage of VP0 into VP4 and VP2. This maturation seems to be an autocatalytic event triggered by the presence of RNA in the capsid and it is followed by a conformational change infectious virion. Post-translationally, myristoylation is required during RNA encapsidation and formation of the mature virus particle. VPg is uridylylated by the polymerase into VPg-pUpU. This acts as a nucleotide-peptide primer for the genomic RNA replication.

The protein resides in the virion. It is found in the host cytoplasm. Its subcellular location is the host cytoplasmic vesicle membrane. It localises to the host nucleus. The catalysed reaction is a ribonucleoside 5'-triphosphate + H2O = a ribonucleoside 5'-diphosphate + phosphate + H(+). It carries out the reaction Selective cleavage of Tyr-|-Gly bond in the picornavirus polyprotein.. It catalyses the reaction RNA(n) + a ribonucleoside 5'-triphosphate = RNA(n+1) + diphosphate. The enzyme catalyses Selective cleavage of Gln-|-Gly bond in the poliovirus polyprotein. In other picornavirus reactions Glu may be substituted for Gln, and Ser or Thr for Gly.. Its activity is regulated as follows. Replication or transcription is subject to high level of random mutations by the nucleotide analog ribavirin. In terms of biological role, forms an icosahedral capsid of pseudo T=3 symmetry with capsid proteins VP2 and VP3. The capsid is 300 Angstroms in diameter, composed of 60 copies of each capsid protein and enclosing the viral positive strand RNA genome. Capsid protein VP1 mainly forms the vertices of the capsid. Capsid protein VP1 interacts with host cell receptor to provide virion attachment to target host cells. This attachment induces virion internalization. Tyrosine kinases are probably involved in the entry process. After binding to its receptor, the capsid undergoes conformational changes. Capsid protein VP1 N-terminus (that contains an amphipathic alpha-helix) and capsid protein VP4 are externalized. Together, they shape a pore in the host membrane through which viral genome is translocated to host cell cytoplasm. Functionally, forms an icosahedral capsid of pseudo T=3 symmetry with capsid proteins VP2 and VP3. The capsid is 300 Angstroms in diameter, composed of 60 copies of each capsid protein and enclosing the viral positive strand RNA genome. Its function is as follows. Lies on the inner surface of the capsid shell. After binding to the host receptor, the capsid undergoes conformational changes. Capsid protein VP4 is released, Capsid protein VP1 N-terminus is externalized, and together, they shape a pore in the host membrane through which the viral genome is translocated into the host cell cytoplasm. Component of immature procapsids, which is cleaved into capsid proteins VP4 and VP2 after maturation. Allows the capsid to remain inactive before the maturation step. In terms of biological role, cysteine protease that cleaves viral polyprotein and specific host proteins. It is responsible for the autocatalytic cleavage between the P1 and P2 regions, which is the first cleavage occurring in the polyprotein. Also cleaves the host translation initiation factor EIF4G1, in order to shut down the capped cellular mRNA translation. Inhibits the host nucleus-cytoplasm protein and RNA trafficking by cleaving host members of the nuclear pores. Counteracts stress granule formation probably by antagonizing its assembly or promoting its dissassembly. Functionally, plays an essential role in the virus replication cycle by acting as a viroporin. Creates a pore in the host endoplasmic reticulum and as a consequence releases Ca2+ in the cytoplasm of infected cell. In turn, high levels of cytoplasmic calcium may trigger membrane trafficking and transport of viral ER-associated proteins to viroplasms, sites of viral genome replication. Its function is as follows. Induces and associates with structural rearrangements of intracellular membranes. Displays RNA-binding, nucleotide binding and NTPase activities. May play a role in virion morphogenesis and viral RNA encapsidation by interacting with the capsid protein VP3. Localizes the viral replication complex to the surface of membranous vesicles. Together with protein 3CD binds the Cis-Active RNA Element (CRE) which is involved in RNA synthesis initiation. Acts as a cofactor to stimulate the activity of 3D polymerase, maybe through a nucleid acid chaperone activity. In terms of biological role, localizes the viral replication complex to the surface of membranous vesicles. It inhibits host cell endoplasmic reticulum-to-Golgi apparatus transport and causes the disassembly of the Golgi complex, possibly through GBF1 interaction. This would result in depletion of MHC, trail receptors and IFN receptors at the host cell surface. Plays an essential role in viral RNA replication by recruiting ACBD3 and PI4KB at the viral replication sites, thereby allowing the formation of the rearranged membranous structures where viral replication takes place. Functionally, acts as a primer for viral RNA replication and remains covalently bound to viral genomic RNA. VPg is uridylylated prior to priming replication into VPg-pUpU. The oriI viral genomic sequence may act as a template for this. The VPg-pUpU is then used as primer on the genomic RNA poly(A) by the RNA-dependent RNA polymerase to replicate the viral genome. During genome replication, the VPg-RNA linkage is removed by the host TDP2, thereby accelerating replication. During the late stage of the replication cycle, host TDP2 is excluded from sites of viral RNA synthesis and encapsidation, allowing for the generation of progeny virions. Its function is as follows. Involved in the viral replication complex and viral polypeptide maturation. It exhibits protease activity with a specificity and catalytic efficiency that is different from protease 3C. Protein 3CD lacks polymerase activity. The 3C domain in the context of protein 3CD may have an RNA binding activity. Protein 3CD binds to the 5'UTR of the viral genome. Replicates the viral genomic RNA on the surface of intracellular membranes. May form linear arrays of subunits that propagate along a strong head-to-tail interaction called interface-I. Covalently attaches UMP to a tyrosine of VPg, which is used to prime RNA synthesis. The positive stranded RNA genome is first replicated at virus induced membranous vesicles, creating a dsRNA genomic replication form. This dsRNA is then used as template to synthesize positive stranded RNA genomes. ss(+)RNA genomes are either translated, replicated or encapsidated. In terms of biological role, major viral protease that mediates proteolytic processing of the polyprotein. Cleaves host EIF5B, contributing to host translation shutoff. Also cleaves host PABPC1, contributing to host translation shutoff. Cleaves host NLRP1, triggers host N-glycine-mediated degradation of the autoinhibitory NLRP1 N-terminal fragment. The protein is Genome polyprotein of Homo sapiens (Human).